Reading from the N-terminus, the 186-residue chain is Protein MTH_152 (186 aa).

This sequence belongs to the flavoredoxin family. As to quaternary structure, homodimer. FMN serves as cofactor.

This is Protein MTH_152 from Methanothermobacter thermautotrophicus (strain ATCC 29096 / DSM 1053 / JCM 10044 / NBRC 100330 / Delta H) (Methanobacterium thermoautotrophicum).